Here is a 220-residue protein sequence, read N- to C-terminus: ATP-dependent dethiobiotin synthetase BioD (220 aa).

11–16 (GVGKTF) is a binding site for ATP. Thr15 is a Mg(2+) binding site. Residue Lys36 is part of the active site. Thr40 is a substrate binding site. ATP is bound by residues Asp48 and 107–110 (EGAG). Residues Asp48 and Glu107 each coordinate Mg(2+).

This sequence belongs to the dethiobiotin synthetase family. In terms of assembly, homodimer. The cofactor is Mg(2+).

Its subcellular location is the cytoplasm. The enzyme catalyses (7R,8S)-7,8-diammoniononanoate + CO2 + ATP = (4R,5S)-dethiobiotin + ADP + phosphate + 3 H(+). Its pathway is cofactor biosynthesis; biotin biosynthesis; biotin from 7,8-diaminononanoate: step 1/2. Catalyzes a mechanistically unusual reaction, the ATP-dependent insertion of CO2 between the N7 and N8 nitrogen atoms of 7,8-diaminopelargonic acid (DAPA, also called 7,8-diammoniononanoate) to form a ureido ring. This is ATP-dependent dethiobiotin synthetase BioD from Aquifex aeolicus (strain VF5).